Here is a 219-residue protein sequence, read N- to C-terminus: Probable nicotinate-nucleotide adenylyltransferase (219 aa).

The protein belongs to the NadD family.

The catalysed reaction is nicotinate beta-D-ribonucleotide + ATP + H(+) = deamido-NAD(+) + diphosphate. Its pathway is cofactor biosynthesis; NAD(+) biosynthesis; deamido-NAD(+) from nicotinate D-ribonucleotide: step 1/1. In terms of biological role, catalyzes the reversible adenylation of nicotinate mononucleotide (NaMN) to nicotinic acid adenine dinucleotide (NaAD). This chain is Probable nicotinate-nucleotide adenylyltransferase, found in Pseudomonas putida (strain GB-1).